The primary structure comprises 304 residues: Ribonuclease Z (304 aa).

7 residues coordinate Zn(2+): His61, His63, Asp65, His66, His138, Asp206, and His265. The active-site Proton acceptor is the Asp65.

This sequence belongs to the RNase Z family. As to quaternary structure, homodimer. Zn(2+) is required as a cofactor.

The catalysed reaction is Endonucleolytic cleavage of RNA, removing extra 3' nucleotides from tRNA precursor, generating 3' termini of tRNAs. A 3'-hydroxy group is left at the tRNA terminus and a 5'-phosphoryl group is left at the trailer molecule.. Its function is as follows. Zinc phosphodiesterase, which displays some tRNA 3'-processing endonuclease activity. Probably involved in tRNA maturation, by removing a 3'-trailer from precursor tRNA. The protein is Ribonuclease Z of Lachnoclostridium phytofermentans (strain ATCC 700394 / DSM 18823 / ISDg) (Clostridium phytofermentans).